Reading from the N-terminus, the 215-residue chain is MGKVYDWFEERLEIQAIADDITSKYVPPHVNIFYCLGGITLTCFIVQVATGFAMTFYYRPTVTEAFASIQYIMTEVNFGWLIRSVHRWSASMMVLMMILHVFRVYLTGGFKKPRELTWITGVVLAVLTVSFGVTGYSLPWDQIGYWAVKIVTGVPEAIPIVGSSLVELLRGSVSVGQSTLTRFYSLHTFVLPLLTAVFMLMHFLMIRKQGISGPL.

Residues 32–52 (IFYCLGGITLTCFIVQVATGF) form a helical membrane-spanning segment. C35 contributes to the heme c binding site. Heme b contacts are provided by H86 and H100. 3 helical membrane passes run 90 to 110 (ASMM…TGGF), 116 to 136 (LTWI…VTGY), and 186 to 206 (LHTF…FLMI). Residues H187 and H202 each contribute to the heme b site.

It belongs to the cytochrome b family. PetB subfamily. In terms of assembly, the 4 large subunits of the cytochrome b6-f complex are cytochrome b6, subunit IV (17 kDa polypeptide, PetD), cytochrome f and the Rieske protein, while the 4 small subunits are PetG, PetL, PetM and PetN. The complex functions as a dimer. Requires heme b as cofactor. Heme c is required as a cofactor.

It is found in the plastid. It localises to the chloroplast thylakoid membrane. In terms of biological role, component of the cytochrome b6-f complex, which mediates electron transfer between photosystem II (PSII) and photosystem I (PSI), cyclic electron flow around PSI, and state transitions. The sequence is that of Cytochrome b6 from Chara vulgaris (Common stonewort).